Consider the following 174-residue polypeptide: Large ribosomal subunit protein uL18 (174 aa).

It belongs to the universal ribosomal protein uL18 family. In terms of assembly, part of the 50S ribosomal subunit. Contacts the 5S and 23S rRNAs.

Its function is as follows. This is one of the proteins that bind and probably mediate the attachment of the 5S RNA into the large ribosomal subunit, where it forms part of the central protuberance. The protein is Large ribosomal subunit protein uL18 of Methanosarcina acetivorans (strain ATCC 35395 / DSM 2834 / JCM 12185 / C2A).